We begin with the raw amino-acid sequence, 503 residues long: Ent-kaurene oxidase-like 5 (503 aa).

A helical transmembrane segment spans residues 8 to 28 (GAGGIGVAAAAAVVAATLAVV). Residue Cys448 participates in heme binding.

Belongs to the cytochrome P450 family. Heme is required as a cofactor. Expressed in roots.

It is found in the membrane. May hydroxylate diterpenes. This Oryza sativa subsp. japonica (Rice) protein is Ent-kaurene oxidase-like 5.